The following is a 777-amino-acid chain: Isoamylase (777 aa).

The signal sequence occupies residues 1-32 (MDPHAPQRQRSGQRLRALALAALACALSPAHA). Ca(2+) is bound by residues D162, E263, T264, N266, and D293. The active-site Nucleophile is D410. The cysteines at positions 419 and 423 are disulfide-linked. E458 functions as the Proton donor in the catalytic mechanism.

Belongs to the glycosyl hydrolase 13 family. In terms of assembly, monomer. Requires Ca(2+) as cofactor.

The enzyme catalyses Hydrolysis of (1-&gt;6)-alpha-D-glucosidic branch linkages in glycogen, amylopectin and their beta-limit dextrins.. In terms of biological role, has a high rate of hydrolysis for glycogen. Does not cleave pullulan. The polypeptide is Isoamylase (iam) (Flavobacterium sp).